Reading from the N-terminus, the 229-residue chain is Heptaprenylglyceryl phosphate synthase (229 aa).

Lys12 contributes to the sn-glycerol 1-phosphate binding site. Positions 14 and 40 each coordinate Mg(2+). Sn-glycerol 1-phosphate is bound by residues 159–164 (YLEYSG), Gly189, and 209–210 (GN).

This sequence belongs to the GGGP/HepGP synthase family. Group I subfamily. In terms of assembly, homodimer. The cofactor is Mg(2+).

The catalysed reaction is sn-glycerol 1-phosphate + all-trans-heptaprenyl diphosphate = 3-heptaprenyl-sn-glycero-1-phosphate + diphosphate. It participates in membrane lipid metabolism; glycerophospholipid metabolism. Prenyltransferase that catalyzes in vivo the transfer of the heptaprenyl moiety of heptaprenyl pyrophosphate (HepPP; 35 carbon atoms) to the C3 hydroxyl of sn-glycerol-1-phosphate (G1P), producing heptaprenylglyceryl phosphate (HepGP). This reaction is an ether-bond-formation step in the biosynthesis of archaea-type G1P-based membrane lipids found in Bacillales. The chain is Heptaprenylglyceryl phosphate synthase from Bacillus cytotoxicus (strain DSM 22905 / CIP 110041 / 391-98 / NVH 391-98).